A 478-amino-acid polypeptide reads, in one-letter code: MSARVLMVQGCTSDAGKSTLVAALCRWLHRQGIAVAPFKPQNMALNSAVTVDGGEIGRAQALQAQACGLEPQTDFNPVLLKPNSDTGAQVIVHGHPVATLDAVGYHAYKATAFNAVLASHARLVERFDVVLVEGAGSPAEINLRDNDIANMGYAEAVDCAVILVADIDRGGVFAHLVGTLALLSASERARVAGVVINRFRGDLALLQPGLAWLERETGKPVLGVLPYLHGLQLDAEDAVPRNAPQEPQSQLRVVVPVLPRISNHTDVDALLAHPQVDVRLIGPGQTPPPCDLILLPGSKSTRHDLQWLRTHGWDAAIARHLRYGGKLLGICGGLQMLGTHLHDPRGIEGAAGSSPGLGWLSLQTTLQPHKQLHRVHGRLLLGDASVSGYEIHCALSSGAALARPLLQLDDGRTDGAISDDGQVLGTYVHGVFDHPMHWLHCWRGPVWRRPRHWILPRCAKPAWSVWPMRCTRIWIPRH.

The region spanning 250-437 is the GATase cobBQ-type domain; that stretch reads QLRVVVPVLP…VHGVFDHPMH (188 aa). Residue Cys-331 is the Nucleophile of the active site. Residue His-429 is part of the active site.

It belongs to the CobB/CobQ family. CobQ subfamily.

The protein operates within cofactor biosynthesis; adenosylcobalamin biosynthesis. Its function is as follows. Catalyzes amidations at positions B, D, E, and G on adenosylcobyrinic A,C-diamide. NH(2) groups are provided by glutamine, and one molecule of ATP is hydrogenolyzed for each amidation. The protein is Cobyric acid synthase of Xanthomonas euvesicatoria pv. vesicatoria (strain 85-10) (Xanthomonas campestris pv. vesicatoria).